Consider the following 459-residue polypeptide: Putrescine aminotransferase (459 aa).

Pyridoxal 5'-phosphate is bound by residues Gly-150 to Thr-151 and Gln-274. Residue Lys-300 is modified to N6-(pyridoxal phosphate)lysine. Pyridoxal 5'-phosphate is bound at residue Thr-332.

This sequence belongs to the class-III pyridoxal-phosphate-dependent aminotransferase family. Putrescine aminotransferase subfamily. Requires pyridoxal 5'-phosphate as cofactor.

The enzyme catalyses an alkane-alpha,omega-diamine + 2-oxoglutarate = an omega-aminoaldehyde + L-glutamate. It carries out the reaction putrescine + 2-oxoglutarate = 1-pyrroline + L-glutamate + H2O. It catalyses the reaction cadaverine + 2-oxoglutarate = 5-aminopentanal + L-glutamate. The protein operates within amine and polyamine degradation; putrescine degradation; 4-aminobutanal from putrescine (transaminase route): step 1/1. Catalyzes the aminotransferase reaction from putrescine to 2-oxoglutarate, leading to glutamate and 4-aminobutanal, which spontaneously cyclizes to form 1-pyrroline. This is the first step in one of two pathways for putrescine degradation, where putrescine is converted into 4-aminobutanoate (gamma-aminobutyrate or GABA) via 4-aminobutanal. Also functions as a cadaverine transaminase in a a L-lysine degradation pathway to succinate that proceeds via cadaverine, glutarate and L-2-hydroxyglutarate. In Escherichia coli O6:H1 (strain CFT073 / ATCC 700928 / UPEC), this protein is Putrescine aminotransferase.